An 84-amino-acid polypeptide reads, in one-letter code: MGKKDASSVKLPVDQYRKQIGKQDYKKTKPVLRATRLKAEAKRSAPGIRDIILVIVAVLLFLLGVYAFFYLNLSTELDLDVDMD.

The helical transmembrane segment at 51–71 (IILVIVAVLLFLLGVYAFFYL) threads the bilayer.

Belongs to the TRIQK family.

The protein resides in the endoplasmic reticulum membrane. Its function is as follows. May play a role in cell growth and maintenance of cell morphology. The chain is Triple QxxK/R motif-containing protein (triqk) from Danio rerio (Zebrafish).